Consider the following 541-residue polypeptide: MSASAPSRPAVVTAPAVPRQDEVLTEAALVFLAELHRRFTPRRDELLARRARRRAEISRTGTLDFLPETAHVRADDSWRVAPAPPALQDRRVEITGPADRRMTVNALNSGARVWLADFEDSSAPTWENVISGQLALSDAYHRRIDFTDERSGKSYALRPDAELATVVMRPRGWHLPERHLTGPDGGVLPGALVDFGLCFFHTARRLLDLGKGPYFYLPKLESHQEARLWNDIFLFAQEQLGIPRGTIRATVLIETITAAYEMEEILYELREHASGLNAGRWDYLFSIIKNFRDAGPGFVLPDRNAITMTAPFMRAYTELLVRTCHRRGAHAIGGMAAFIPSRRDPEINRAAFEKVRADKDREAADGFDGSWVAHPDLVPVALASFDAVLGDRPHQKDRLREEVSVTAAELIAVGSPAARPTAAGLLNAVRVGIRYIEAWLRGTGAVAIFHLMEDAATAEISRSQIWQWINAGVVLENGERVTPALVRTLAAGELGALRETLGGEEYAAGRWQEAHDLLLRVALDEEYADFLTLPAYERLTG.

Residue arginine 169 is the Proton acceptor of the active site. Catalysis depends on aspartate 454, which acts as the Proton donor.

This sequence belongs to the malate synthase family.

It localises to the cytoplasm. The enzyme catalyses glyoxylate + acetyl-CoA + H2O = (S)-malate + CoA + H(+). The protein operates within carbohydrate metabolism; glyoxylate cycle; (S)-malate from isocitrate: step 2/2. The sequence is that of Malate synthase (aceB) from Streptomyces clavuligerus.